We begin with the raw amino-acid sequence, 78 residues long: NAD(P)H-quinone oxidoreductase subunit O (78 aa).

The protein belongs to the complex I NdhO subunit family. In terms of assembly, NDH-1 can be composed of about 15 different subunits; different subcomplexes with different compositions have been identified which probably have different functions.

The protein localises to the cell inner membrane. The enzyme catalyses a plastoquinone + NADH + (n+1) H(+)(in) = a plastoquinol + NAD(+) + n H(+)(out). It carries out the reaction a plastoquinone + NADPH + (n+1) H(+)(in) = a plastoquinol + NADP(+) + n H(+)(out). In terms of biological role, NDH-1 shuttles electrons from an unknown electron donor, via FMN and iron-sulfur (Fe-S) centers, to quinones in the respiratory and/or the photosynthetic chain. The immediate electron acceptor for the enzyme in this species is believed to be plastoquinone. Couples the redox reaction to proton translocation, and thus conserves the redox energy in a proton gradient. Cyanobacterial NDH-1 also plays a role in inorganic carbon-concentration. The sequence is that of NAD(P)H-quinone oxidoreductase subunit O from Gloeobacter violaceus (strain ATCC 29082 / PCC 7421).